The sequence spans 387 residues: 3-ketoacyl-CoA thiolase (387 aa).

Cysteine 91 (acyl-thioester intermediate) is an active-site residue. Catalysis depends on proton acceptor residues histidine 343 and cysteine 373.

The protein belongs to the thiolase-like superfamily. Thiolase family. Heterotetramer of two alpha chains (FadB) and two beta chains (FadA).

It localises to the cytoplasm. It carries out the reaction an acyl-CoA + acetyl-CoA = a 3-oxoacyl-CoA + CoA. It functions in the pathway lipid metabolism; fatty acid beta-oxidation. Catalyzes the final step of fatty acid oxidation in which acetyl-CoA is released and the CoA ester of a fatty acid two carbons shorter is formed. The polypeptide is 3-ketoacyl-CoA thiolase (Shewanella frigidimarina (strain NCIMB 400)).